The chain runs to 452 residues: Bifunctional protein GlmU (452 aa).

Residues 1 to 232 (MTSRTSLTIV…EDEVRGINTK (232 aa)) form a pyrophosphorylase region. UDP-N-acetyl-alpha-D-glucosamine is bound by residues 11 to 14 (LAAG), Lys-25, Gln-78, and 83 to 84 (GT). Asp-108 is a binding site for Mg(2+). UDP-N-acetyl-alpha-D-glucosamine contacts are provided by Gly-144, Glu-158, Asn-173, and Asn-230. Asn-230 is a Mg(2+) binding site. The segment at 233 to 253 (AQLAEAEAVMQARLRQAALDA) is linker. The interval 254-452 (GVTMIAPETV…KTRGKTRPAK (199 aa)) is N-acetyltransferase. UDP-N-acetyl-alpha-D-glucosamine is bound by residues Arg-319 and Lys-337. His-349 functions as the Proton acceptor in the catalytic mechanism. 2 residues coordinate UDP-N-acetyl-alpha-D-glucosamine: Tyr-352 and Asn-363. Acetyl-CoA-binding positions include Ala-366, 372–373 (NY), Ser-391, Ser-409, and Arg-426.

The protein in the N-terminal section; belongs to the N-acetylglucosamine-1-phosphate uridyltransferase family. This sequence in the C-terminal section; belongs to the transferase hexapeptide repeat family. As to quaternary structure, homotrimer. Mg(2+) serves as cofactor.

The protein resides in the cytoplasm. It carries out the reaction alpha-D-glucosamine 1-phosphate + acetyl-CoA = N-acetyl-alpha-D-glucosamine 1-phosphate + CoA + H(+). It catalyses the reaction N-acetyl-alpha-D-glucosamine 1-phosphate + UTP + H(+) = UDP-N-acetyl-alpha-D-glucosamine + diphosphate. The protein operates within nucleotide-sugar biosynthesis; UDP-N-acetyl-alpha-D-glucosamine biosynthesis; N-acetyl-alpha-D-glucosamine 1-phosphate from alpha-D-glucosamine 6-phosphate (route II): step 2/2. Its pathway is nucleotide-sugar biosynthesis; UDP-N-acetyl-alpha-D-glucosamine biosynthesis; UDP-N-acetyl-alpha-D-glucosamine from N-acetyl-alpha-D-glucosamine 1-phosphate: step 1/1. It participates in bacterial outer membrane biogenesis; LPS lipid A biosynthesis. In terms of biological role, catalyzes the last two sequential reactions in the de novo biosynthetic pathway for UDP-N-acetylglucosamine (UDP-GlcNAc). The C-terminal domain catalyzes the transfer of acetyl group from acetyl coenzyme A to glucosamine-1-phosphate (GlcN-1-P) to produce N-acetylglucosamine-1-phosphate (GlcNAc-1-P), which is converted into UDP-GlcNAc by the transfer of uridine 5-monophosphate (from uridine 5-triphosphate), a reaction catalyzed by the N-terminal domain. This Rhodopseudomonas palustris (strain BisA53) protein is Bifunctional protein GlmU.